We begin with the raw amino-acid sequence, 160 residues long: Small ribosomal subunit protein uS9 (160 aa).

The protein belongs to the universal ribosomal protein uS9 family.

The protein is Small ribosomal subunit protein uS9 of Xanthobacter autotrophicus (strain ATCC BAA-1158 / Py2).